We begin with the raw amino-acid sequence, 334 residues long: N-acetyl-gamma-glutamyl-phosphate reductase (334 aa).

Cysteine 154 is an active-site residue.

The protein belongs to the NAGSA dehydrogenase family. Type 1 subfamily.

It localises to the cytoplasm. The catalysed reaction is N-acetyl-L-glutamate 5-semialdehyde + phosphate + NADP(+) = N-acetyl-L-glutamyl 5-phosphate + NADPH + H(+). The protein operates within amino-acid biosynthesis; L-arginine biosynthesis; N(2)-acetyl-L-ornithine from L-glutamate: step 3/4. Catalyzes the NADPH-dependent reduction of N-acetyl-5-glutamyl phosphate to yield N-acetyl-L-glutamate 5-semialdehyde. The chain is N-acetyl-gamma-glutamyl-phosphate reductase from Escherichia coli O157:H7.